The sequence spans 407 residues: tRNA pseudouridine synthase 4 (407 aa).

Residues 83-105 (FRPAPPHPNDRNRRRRKSNRLPD) form a disordered region. The active-site Nucleophile is the Asp-115. A disordered region spans residues 274-298 (TEQDINPQDGDEKINAKSPTTNSVT). Position 291 is a phosphoserine (Ser-291). Position 293 is a phosphothreonine (Thr-293). The residue at position 296 (Ser-296) is a Phosphoserine. At Thr-406 the chain carries Phosphothreonine.

This sequence belongs to the pseudouridine synthase TruB family.

The protein localises to the nucleus. Its subcellular location is the mitochondrion. The enzyme catalyses uridine(55) in tRNA = pseudouridine(55) in tRNA. It carries out the reaction a uridine in mRNA = a pseudouridine in mRNA. Its function is as follows. Responsible for synthesis of pseudouridine from uracil-55 in the psi GC loop of transfer RNAs. Also catalyzes pseudouridylation of mRNAs with the consensus sequence 5'-GGUUCRA-3'. In Schizosaccharomyces pombe (strain 972 / ATCC 24843) (Fission yeast), this protein is tRNA pseudouridine synthase 4.